Consider the following 264-residue polypeptide: Thiazole synthase (264 aa).

Lysine 101 (schiff-base intermediate with DXP) is an active-site residue. Residues glycine 162, 188 to 189, and 210 to 211 each bind 1-deoxy-D-xylulose 5-phosphate; these read AG and NT.

The protein belongs to the ThiG family. Homotetramer. Forms heterodimers with either ThiH or ThiS.

Its subcellular location is the cytoplasm. It carries out the reaction [ThiS sulfur-carrier protein]-C-terminal-Gly-aminoethanethioate + 2-iminoacetate + 1-deoxy-D-xylulose 5-phosphate = [ThiS sulfur-carrier protein]-C-terminal Gly-Gly + 2-[(2R,5Z)-2-carboxy-4-methylthiazol-5(2H)-ylidene]ethyl phosphate + 2 H2O + H(+). The protein operates within cofactor biosynthesis; thiamine diphosphate biosynthesis. Functionally, catalyzes the rearrangement of 1-deoxy-D-xylulose 5-phosphate (DXP) to produce the thiazole phosphate moiety of thiamine. Sulfur is provided by the thiocarboxylate moiety of the carrier protein ThiS. In vitro, sulfur can be provided by H(2)S. The polypeptide is Thiazole synthase (Chromobacterium violaceum (strain ATCC 12472 / DSM 30191 / JCM 1249 / CCUG 213 / NBRC 12614 / NCIMB 9131 / NCTC 9757 / MK)).